Consider the following 87-residue polypeptide: UPF0335 protein RHECIAT_CH0003797 (87 aa).

The protein belongs to the UPF0335 family.

The chain is UPF0335 protein RHECIAT_CH0003797 from Rhizobium etli (strain CIAT 652).